The following is a 680-amino-acid chain: MSHPPIQTATLSWNEQGTPVSEQFGDIYFSNEDGLEETHYVFLKGNGFPERFALHPRDNCVFAETGFGTGLNFLTLWRDFAQFRQLHPAAKLQRLHYISFEKYPLQVADLAAAHQRWPELACFAEQLRAQWPLPLAGCHRILLAEGAITLDLWFGDVNTLLPQLDSSLNNQVDAWFLDGFAPAKNPDMWNDVLFNAMARMARPGGTFATFTAAGFVRRGLQQAGFDVAKIKGFGQKREMLTGILPQRLNTQSEPWYHRPLATRCDDIAIIGGGIVSALTALALLRRSAKVTLYCADALPAQGASGNRQGALYPLLNGKNDALEIFFTSAFTFARRQYSQLLEQGIRFDHQWCGVSQLAFDEKSRGKINKMLQTDWPPQLAAAMSREQLSALAGLDCAHDGIHYPAGGWLCPSDLTTALMALAQQLGMTCHYGHELCQLERVDGLWQLIFTSPQVNRQHTTVVLATGHRLPEWQQTQHLPLSAVRGQVSHIPTTPVLSQLRQVLCYDGYLTPVNPANQHHCIGASYQRGDVTTDFRADEQQENRDRLLRCLPDVSWPQQVDISDNQARCGVRCAIRDHLPMVGAVPDYSATLAQYQDLPRKIQHGEDIPLAPVWPELFMVGALGSRGLCSAPLVAEILAAQMFGEPQPLDTTTLAALNPNRFWIRKLLKGRPVQQRVSVLS.

Positions 1–245 are tRNA (mnm(5)s(2)U34)-methyltransferase; that stretch reads MSHPPIQTAT…KREMLTGILP (245 aa). The interval 270–680 is FAD-dependent cmnm(5)s(2)U34 oxidoreductase; that stretch reads IGGGIVSALT…PVQQRVSVLS (411 aa).

This sequence in the N-terminal section; belongs to the methyltransferase superfamily. tRNA (mnm(5)s(2)U34)-methyltransferase family. The protein in the C-terminal section; belongs to the DAO family. It depends on FAD as a cofactor.

It localises to the cytoplasm. The catalysed reaction is 5-aminomethyl-2-thiouridine(34) in tRNA + S-adenosyl-L-methionine = 5-methylaminomethyl-2-thiouridine(34) in tRNA + S-adenosyl-L-homocysteine + H(+). In terms of biological role, catalyzes the last two steps in the biosynthesis of 5-methylaminomethyl-2-thiouridine (mnm(5)s(2)U) at the wobble position (U34) in tRNA. Catalyzes the FAD-dependent demodification of cmnm(5)s(2)U34 to nm(5)s(2)U34, followed by the transfer of a methyl group from S-adenosyl-L-methionine to nm(5)s(2)U34, to form mnm(5)s(2)U34. The chain is tRNA 5-methylaminomethyl-2-thiouridine biosynthesis bifunctional protein MnmC from Yersinia enterocolitica serotype O:8 / biotype 1B (strain NCTC 13174 / 8081).